The chain runs to 555 residues: mRNA cleavage and polyadenylation factor CLP1 (555 aa).

ATP-binding positions include Glu30, Lys69, and 156 to 161; that span reads YLGKTS. Residues 431-451 are disordered; that stretch reads DDFEHITNEDENGGDGNDGDG.

This sequence belongs to the Clp1 family. Clp1 subfamily. Component of a pre-mRNA cleavage factor complex. Interacts directly with PCF11.

Its subcellular location is the nucleus. Required for endonucleolytic cleavage during polyadenylation-dependent pre-mRNA 3'-end formation. This chain is mRNA cleavage and polyadenylation factor CLP1, found in Lodderomyces elongisporus (strain ATCC 11503 / CBS 2605 / JCM 1781 / NBRC 1676 / NRRL YB-4239) (Yeast).